Here is a 201-residue protein sequence, read N- to C-terminus: Nuclear protein UL4 (201 aa).

Belongs to the alphaherpesvirinae HHV-1 UL4 family.

It is found in the host nucleus. This is Nuclear protein UL4 from Human herpesvirus 2 (strain HG52) (HHV-2).